The primary structure comprises 93 residues: Small ribosomal subunit protein bS18 (93 aa).

Belongs to the bacterial ribosomal protein bS18 family. As to quaternary structure, part of the 30S ribosomal subunit. Forms a tight heterodimer with protein bS6.

Functionally, binds as a heterodimer with protein bS6 to the central domain of the 16S rRNA, where it helps stabilize the platform of the 30S subunit. The protein is Small ribosomal subunit protein bS18 of Variovorax paradoxus (strain S110).